The sequence spans 303 residues: Albumin b-32 (303 aa).

The span at 112 to 137 (ATPTSSATTPGGSASAAGTRTSSATR) shows a compositional bias: low complexity. Residues 112–175 (ATPTSSATTP…GGGGADADAD (64 aa)) are disordered. The segment covering 146–156 (ARDDQGRQRPG) has biased composition (basic and acidic residues).

The protein belongs to the ribosome-inactivating protein family. Type 1 RIP subfamily. As to quaternary structure, monomer. In terms of tissue distribution, endosperm.

The protein localises to the cytoplasm. It catalyses the reaction Endohydrolysis of the N-glycosidic bond at one specific adenosine on the 28S rRNA.. A possible regulatory factor for the synthesis of zeins, the major group of storage proteins. The chain is Albumin b-32 (O6) from Zea mays (Maize).